Here is a 351-residue protein sequence, read N- to C-terminus: Quinolinate phosphoribosyltransferase [decarboxylating] 2, mitochondrial (351 aa).

Substrate is bound by residues arginine 142, 173–175, arginine 197, lysine 207, glutamate 240, aspartate 267, 299–301, and 320–322; these read TRK, SGN, and SGA.

This sequence belongs to the NadC/ModD family.

The protein localises to the mitochondrion. It catalyses the reaction nicotinate beta-D-ribonucleotide + CO2 + diphosphate = quinolinate + 5-phospho-alpha-D-ribose 1-diphosphate + 2 H(+). It functions in the pathway alkaloid biosynthesis; nicotine biosynthesis. It participates in cofactor biosynthesis; NAD(+) biosynthesis; nicotinate D-ribonucleotide from quinolinate: step 1/1. In terms of biological role, involved in the biosynthesis of pyridine alkaloid natural products, leading mainly to the production of anabasine, anatabine, nicotine and nornicotine, effective deterrents against herbivores with antiparasitic and pesticide properties (neurotoxins); nornicotine serves as the precursor in the synthesis of the carcinogen compound N'-nitrosonornicotine (NNN). Involved in the catabolism of quinolinic acid (QA). The polypeptide is Quinolinate phosphoribosyltransferase [decarboxylating] 2, mitochondrial (Nicotiana glauca (Glaucous tobacco)).